The sequence spans 452 residues: Metacaspase-1 (452 aa).

Positions 1–97 are disordered; sequence MYPGAGRPTY…GPPLQGRPRD (97 aa). Over residues 16-41 the composition is skewed to low complexity; that stretch reads QKGPYGQPQYQQQYAPPYPERYQQPY. Residues His238 and Cys294 contribute to the active site.

The protein belongs to the peptidase C14B family.

Functionally, involved in cell death (apoptosis). The polypeptide is Metacaspase-1 (MCA1) (Eremothecium gossypii (strain ATCC 10895 / CBS 109.51 / FGSC 9923 / NRRL Y-1056) (Yeast)).